Reading from the N-terminus, the 682-residue chain is Tail-specific protease (682 aa).

The signal sequence occupies residues 1-22 (MNTFFRLTALAGLLALAGQSFA). Residues 238-322 (NTEMSLSLEG…SKVRLEILPA (85 aa)) enclose the PDZ domain. Residues Ser-452, Asp-463, and Lys-477 each act as charge relay system in the active site.

Belongs to the peptidase S41A family.

It localises to the cell inner membrane. It carries out the reaction The enzyme shows specific recognition of a C-terminal tripeptide, Xaa-Yaa-Zaa, in which Xaa is preferably Ala or Leu, Yaa is preferably Ala or Tyr, and Zaa is preferably Ala, but then cleaves at a variable distance from the C-terminus. A typical cleavage is -Ala-Ala-|-Arg-Ala-Ala-Lys-Glu-Asn-Tyr-Ala-Leu-Ala-Ala.. Functionally, involved in the cleavage of a C-terminal peptide of 11 residues from the precursor form of penicillin-binding protein 3 (PBP3). May be involved in protection of the bacterium from thermal and osmotic stresses. In Salmonella typhimurium (strain LT2 / SGSC1412 / ATCC 700720), this protein is Tail-specific protease (prc).